A 378-amino-acid polypeptide reads, in one-letter code: Protein-glutamate methylesterase/protein-glutamine glutaminase 2 (378 aa).

The 118-residue stretch at 4 to 121 (KVLVVDDSGF…SRNPEKVKQL (118 aa)) folds into the Response regulatory domain. A 4-aspartylphosphate modification is found at Asp-55. Positions 141-188 (APAPAAAPTPAPIPAAAPSSFGSHSAPARPAPAPAPTRAPAASASSPA) are disordered. A compositionally biased stretch (pro residues) spans 145–155 (AAAPTPAPIPA). Low complexity-rich tracts occupy residues 156–168 (AAPS…SAPA) and 178–188 (RAPAASASSPA). A CheB-type methylesterase domain is found at 187–378 (PAPKRKNYKL…IGKHIVEACV (192 aa)). Residues Ser-202, His-229, and Asp-322 contribute to the active site.

It belongs to the CheB family. Post-translationally, phosphorylated by CheA. Phosphorylation of the N-terminal regulatory domain activates the methylesterase activity.

It localises to the cytoplasm. It catalyses the reaction [protein]-L-glutamate 5-O-methyl ester + H2O = L-glutamyl-[protein] + methanol + H(+). It carries out the reaction L-glutaminyl-[protein] + H2O = L-glutamyl-[protein] + NH4(+). Involved in chemotaxis. Part of a chemotaxis signal transduction system that modulates chemotaxis in response to various stimuli. Catalyzes the demethylation of specific methylglutamate residues introduced into the chemoreceptors (methyl-accepting chemotaxis proteins or MCP) by CheR. Also mediates the irreversible deamidation of specific glutamine residues to glutamic acid. This Pseudomonas fluorescens (strain Pf0-1) protein is Protein-glutamate methylesterase/protein-glutamine glutaminase 2.